A 208-amino-acid chain; its full sequence is Interleukin-6 (208 aa).

The signal sequence occupies residues 1–29 (MNSRFTSAFTPFAVSLGLLLVMTSAFPTP). A glycan (N-linked (GlcNAc...) asparagine) is linked at Asn38. Cysteines 72 and 78 form a disulfide. The residue at position 81 (Ser81) is a Phosphoserine. A disulfide bridge links Cys101 with Cys111.

The protein belongs to the IL-6 superfamily. Component of a hexamer of two molecules each of IL6, IL6R and IL6ST; first binds to IL6R to associate with the signaling subunit IL6ST. Interacts with IL6R (via the N-terminal ectodomain); this interaction may be affected by IL6R-binding with SORL1, hence decreasing IL6 cis signaling. Interacts with SORL1 (via the N-terminal ectodomain); this interaction leads to IL6 internalization and lysosomal degradation. May form a trimeric complex with the soluble SORL1 ectodomain and soluble IL6R receptor; this interaction might stabilize circulating IL6, hence promoting IL6 trans signaling.

It is found in the secreted. In terms of biological role, cytokine with a wide variety of biological functions in immunity, tissue regeneration, and metabolism. Binds to IL6R, then the complex associates to the signaling subunit IL6ST/gp130 to trigger the intracellular IL6-signaling pathway. The interaction with the membrane-bound IL6R and IL6ST stimulates 'classic signaling', whereas the binding of IL6 and soluble IL6R to IL6ST stimulates 'trans-signaling'. Alternatively, 'cluster signaling' occurs when membrane-bound IL6:IL6R complexes on transmitter cells activate IL6ST receptors on neighboring receiver cells. Its function is as follows. IL6 is a potent inducer of the acute phase response. Rapid production of IL6 contributes to host defense during infection and tissue injury, but excessive IL6 synthesis is involved in disease pathology. In the innate immune response, is synthesized by myeloid cells, such as macrophages and dendritic cells, upon recognition of pathogens through toll-like receptors (TLRs) at the site of infection or tissue injury. In the adaptive immune response, is required for the differentiation of B cells into immunoglobulin-secreting cells. Plays a major role in the differentiation of CD4(+) T cell subsets. Essential factor for the development of T follicular helper (Tfh) cells that are required for the induction of germinal-center formation. Required to drive naive CD4(+) T cells to the Th17 lineage. Also required for proliferation of myeloma cells and the survival of plasmablast cells. Acts as an essential factor in bone homeostasis and on vessels directly or indirectly by induction of VEGF, resulting in increased angiogenesis activity and vascular permeability. Induces, through 'trans-signaling' and synergistically with IL1B and TNF, the production of VEGF. Involved in metabolic controls, is discharged into the bloodstream after muscle contraction increasing lipolysis and improving insulin resistance. 'Trans-signaling' in central nervous system also regulates energy and glucose homeostasis. Mediates, through GLP-1, crosstalk between insulin-sensitive tissues, intestinal L cells and pancreatic islets to adapt to changes in insulin demand. Also acts as a myokine. Plays a protective role during liver injury, being required for maintenance of tissue regeneration. Also has a pivotal role in iron metabolism by regulating HAMP/hepcidin expression upon inflammation or bacterial infection. Through activation of IL6ST-YAP-NOTCH pathway, induces inflammation-induced epithelial regeneration. The protein is Interleukin-6 (IL6) of Bubalus bubalis (Domestic water buffalo).